The chain runs to 264 residues: Thymidylate synthase (264 aa).

DUMP is bound at residue arginine 21. Residue histidine 51 coordinates (6R)-5,10-methylene-5,6,7,8-tetrahydrofolate. 126–127 (RR) contributes to the dUMP binding site. The active-site Nucleophile is cysteine 146. Residues 166 to 169 (RSCD), asparagine 177, and 207 to 209 (HLY) each bind dUMP. Aspartate 169 serves as a coordination point for (6R)-5,10-methylene-5,6,7,8-tetrahydrofolate. Alanine 263 provides a ligand contact to (6R)-5,10-methylene-5,6,7,8-tetrahydrofolate.

The protein belongs to the thymidylate synthase family. Bacterial-type ThyA subfamily. Homodimer.

The protein localises to the cytoplasm. The enzyme catalyses dUMP + (6R)-5,10-methylene-5,6,7,8-tetrahydrofolate = 7,8-dihydrofolate + dTMP. Its pathway is pyrimidine metabolism; dTTP biosynthesis. Functionally, catalyzes the reductive methylation of 2'-deoxyuridine-5'-monophosphate (dUMP) to 2'-deoxythymidine-5'-monophosphate (dTMP) while utilizing 5,10-methylenetetrahydrofolate (mTHF) as the methyl donor and reductant in the reaction, yielding dihydrofolate (DHF) as a by-product. This enzymatic reaction provides an intracellular de novo source of dTMP, an essential precursor for DNA biosynthesis. The polypeptide is Thymidylate synthase (Xenorhabdus nematophila (strain ATCC 19061 / DSM 3370 / CCUG 14189 / LMG 1036 / NCIMB 9965 / AN6)).